Consider the following 145-residue polypeptide: 3-hydroxyacyl-[acyl-carrier-protein] dehydratase FabZ (145 aa).

His49 is a catalytic residue.

The protein belongs to the thioester dehydratase family. FabZ subfamily.

It localises to the cytoplasm. The enzyme catalyses a (3R)-hydroxyacyl-[ACP] = a (2E)-enoyl-[ACP] + H2O. Functionally, involved in unsaturated fatty acids biosynthesis. Catalyzes the dehydration of short chain beta-hydroxyacyl-ACPs and long chain saturated and unsaturated beta-hydroxyacyl-ACPs. The protein is 3-hydroxyacyl-[acyl-carrier-protein] dehydratase FabZ of Rickettsia typhi (strain ATCC VR-144 / Wilmington).